The primary structure comprises 371 residues: Carbamoyl phosphate synthase small chain (371 aa).

The CPSase stretch occupies residues 1-182 (MGVHKKGYLV…KNPIVHTPKN (182 aa)). L-glutamine-binding residues include Ser49, Gly235, and Gly237. A Glutamine amidotransferase type-1 domain is found at 186–371 (RVVVLDLGVK…EFVKILEGRK (186 aa)). The Nucleophile role is filled by Cys263. Leu264, Gln267, Asn305, Gly307, and Tyr308 together coordinate L-glutamine. Active-site residues include His346 and Glu348.

This sequence belongs to the CarA family. Composed of two chains; the small (or glutamine) chain promotes the hydrolysis of glutamine to ammonia, which is used by the large (or ammonia) chain to synthesize carbamoyl phosphate. Tetramer of heterodimers (alpha,beta)4.

It catalyses the reaction hydrogencarbonate + L-glutamine + 2 ATP + H2O = carbamoyl phosphate + L-glutamate + 2 ADP + phosphate + 2 H(+). It carries out the reaction L-glutamine + H2O = L-glutamate + NH4(+). It functions in the pathway amino-acid biosynthesis; L-arginine biosynthesis; carbamoyl phosphate from bicarbonate: step 1/1. Its pathway is pyrimidine metabolism; UMP biosynthesis via de novo pathway; (S)-dihydroorotate from bicarbonate: step 1/3. Functionally, small subunit of the glutamine-dependent carbamoyl phosphate synthetase (CPSase). CPSase catalyzes the formation of carbamoyl phosphate from the ammonia moiety of glutamine, carbonate, and phosphate donated by ATP, constituting the first step of 2 biosynthetic pathways, one leading to arginine and/or urea and the other to pyrimidine nucleotides. The small subunit (glutamine amidotransferase) binds and cleaves glutamine to supply the large subunit with the substrate ammonia. This Pyrococcus furiosus (strain ATCC 43587 / DSM 3638 / JCM 8422 / Vc1) protein is Carbamoyl phosphate synthase small chain.